Here is a 415-residue protein sequence, read N- to C-terminus: MSFLKTSDPAVYNAIMQETTRLKETIDLIASENYTSKAVLEAQGSVFTNKYAEGYPGKRYYAGCEYADAVEELAIDRAKTLFHAEHANVQPHSGAQANMAAYFAMVKPGDTIMGLTLSHGGHLTHGSKVNFTGKLYHVIEYGLNAETERIDYDNLEKLAMEHRPRMIVTGASAYPRILDFERFRAICDKVDAKLMVDIAHIAGLVAAGLHPSPVPYADVVTSTSHKTLRGPRGGFILCKEQYAKAIDQAVFPVMQGGPLMQVVAAKAVAFQEAMQPGFVTYQKKTLENTQVMAEELRKLGLRLVSGGTDNHLVLVDLSPIGVNGYDAQLALRRAGIVINRNTVPFAENQTANVPAGIRLGCPAATSRGFGPAEIRQTVGWIGKILKNIGNEDVEKQVLAEVIHLCRKFPVPGIDI.

(6S)-5,6,7,8-tetrahydrofolate-binding positions include Leu-117 and 121-123; that span reads GHL. Lys-226 carries the post-translational modification N6-(pyridoxal phosphate)lysine.

The protein belongs to the SHMT family. Homodimer. It depends on pyridoxal 5'-phosphate as a cofactor.

It localises to the cytoplasm. It catalyses the reaction (6R)-5,10-methylene-5,6,7,8-tetrahydrofolate + glycine + H2O = (6S)-5,6,7,8-tetrahydrofolate + L-serine. The protein operates within one-carbon metabolism; tetrahydrofolate interconversion. It functions in the pathway amino-acid biosynthesis; glycine biosynthesis; glycine from L-serine: step 1/1. Functionally, catalyzes the reversible interconversion of serine and glycine with tetrahydrofolate (THF) serving as the one-carbon carrier. This reaction serves as the major source of one-carbon groups required for the biosynthesis of purines, thymidylate, methionine, and other important biomolecules. Also exhibits THF-independent aldolase activity toward beta-hydroxyamino acids, producing glycine and aldehydes, via a retro-aldol mechanism. This is Serine hydroxymethyltransferase from Dehalococcoides mccartyi (strain ATCC BAA-2100 / JCM 16839 / KCTC 5957 / BAV1).